The sequence spans 146 residues: Ribosome maturation factor RimP (146 aa).

This sequence belongs to the RimP family.

The protein resides in the cytoplasm. Its function is as follows. Required for maturation of 30S ribosomal subunits. This is Ribosome maturation factor RimP from Helicobacter pylori (strain Shi470).